The sequence spans 292 residues: Homoserine kinase (292 aa).

Residue 84 to 94 (PLSRGLGSSSA) participates in ATP binding.

The protein belongs to the GHMP kinase family. Homoserine kinase subfamily.

The protein resides in the cytoplasm. The catalysed reaction is L-homoserine + ATP = O-phospho-L-homoserine + ADP + H(+). Its pathway is amino-acid biosynthesis; L-threonine biosynthesis; L-threonine from L-aspartate: step 4/5. Catalyzes the ATP-dependent phosphorylation of L-homoserine to L-homoserine phosphate. This is Homoserine kinase from Campylobacter jejuni subsp. jejuni serotype O:23/36 (strain 81-176).